A 518-amino-acid chain; its full sequence is Sensor protein kinase HptS (518 aa).

2 helical membrane passes run 20–40 and 222–242; these read IFPVFLVIIIGLVSFYAIYIW and GITLLIVMAVVLVLLVIFGFI. Positions 297–513 constitute a Histidine kinase domain; sequence EQLIHSIEHT…LICYKIPLSR (217 aa). Residue His-325 is modified to Phosphohistidine; by autocatalysis.

Autophosphorylated.

It localises to the cell membrane. It carries out the reaction ATP + protein L-histidine = ADP + protein N-phospho-L-histidine.. In terms of biological role, member of the two-component regulatory system HptS/HptR that regulates genes involved in hexose phosphate transport system in response to changes in extracellular phosphate sources. May act as a sensor protein kinase which is autophosphorylated at a histidine residue and transfers its phosphate group to the conserved aspartic acid residue in the regulatory domain of HptS. In turn, HptS antagonizes CcpA-dependent transcription of a subset of CcpA-regulated genes involved in antibiotic susceptibility. This chain is Sensor protein kinase HptS (hptS), found in Staphylococcus aureus (strain MRSA252).